The primary structure comprises 81 residues: Short neurotoxin 1 (81 aa).

An N-terminal signal peptide occupies residues 1–21 (MKTLLLSPVVVTIVCLDLGYT). Intrachain disulfides connect C24–C43, C38–C60, C62–C73, and C74–C79.

The protein belongs to the three-finger toxin family. Short-chain subfamily. Type I alpha-neurotoxin sub-subfamily. Expressed by the venom gland.

Its subcellular location is the secreted. Functionally, binds to muscle nicotinic acetylcholine receptor (nAChR) and inhibit acetylcholine from binding to the receptor, thereby impairing neuromuscular transmission. This Hydrophis peronii (Spiny-headed seasnake) protein is Short neurotoxin 1.